The chain runs to 360 residues: GTPase Obg (360 aa).

One can recognise an Obg domain in the interval 1–156 (MFVDSVEIII…KCVRLELKLI (156 aa)). The region spanning 157–360 (ADIGLVGFPN…LKFVLLEALP (204 aa)) is the OBG-type G domain. Residues 163–170 (GFPNAGKS), 188–192 (FTTLV), 210–213 (DIPG), 279–282 (NKCD), and 341–343 (SAV) each bind GTP. The Mg(2+) site is built by serine 170 and threonine 190.

The protein belongs to the TRAFAC class OBG-HflX-like GTPase superfamily. OBG GTPase family. As to quaternary structure, monomer. Mg(2+) serves as cofactor.

It is found in the cytoplasm. Functionally, an essential GTPase which binds GTP, GDP and possibly (p)ppGpp with moderate affinity, with high nucleotide exchange rates and a fairly low GTP hydrolysis rate. Plays a role in control of the cell cycle, stress response, ribosome biogenesis and in those bacteria that undergo differentiation, in morphogenesis control. The polypeptide is GTPase Obg (Helicobacter pylori (strain ATCC 700392 / 26695) (Campylobacter pylori)).